Here is a 315-residue protein sequence, read N- to C-terminus: Methionine import ATP-binding protein MetN (315 aa).

Positions 2–219 constitute an ABC transporter domain; the sequence is IEIEKVCVDF…PQHAFTQQLV (218 aa). Position 16–23 (16–23) interacts with ATP; it reads GTSGAGKS.

The protein belongs to the ABC transporter superfamily. Methionine importer (TC 3.A.1.24) family. The complex is composed of two ATP-binding proteins (MetN), two transmembrane proteins (MetI) and a solute-binding protein (MetQ).

Its subcellular location is the cell inner membrane. The catalysed reaction is L-methionine(out) + ATP + H2O = L-methionine(in) + ADP + phosphate + H(+). It carries out the reaction D-methionine(out) + ATP + H2O = D-methionine(in) + ADP + phosphate + H(+). Its function is as follows. Part of the ABC transporter complex MetNIQ involved in methionine import. Responsible for energy coupling to the transport system. The protein is Methionine import ATP-binding protein MetN of Salmonella enteritidis.